Here is a 174-residue protein sequence, read N- to C-terminus: Thioredoxin O, mitochondrial (174 aa).

The transit peptide at 1–59 directs the protein to the mitochondrion; that stretch reads MALAHRLCRLPRLLPLAAAAAASKPYLPGKPSPAPPPPLSSPPPFPSLSRLFSTTPSSS. The Thioredoxin domain maps to 60–172; it reads GDSSMVVVGS…LESTMESLHK (113 aa). Catalysis depends on nucleophile residues C96 and C99. C96 and C99 form a disulfide bridge.

This sequence belongs to the thioredoxin family. Plant O-type subfamily.

Its subcellular location is the mitochondrion. In terms of biological role, probable thiol-disulfide oxidoreductase that may participate in various redox reactions. This is Thioredoxin O, mitochondrial from Oryza sativa subsp. japonica (Rice).